Consider the following 1011-residue polypeptide: Vacuolar membrane protease (1011 aa).

Residues 1–14 are Cytoplasmic-facing; sequence MKLTKAVFRFRRTN. A helical transmembrane segment spans residues 15–35; it reads LSTLLVITYLVITTLYVWDHF. Residues 36–352 lie on the Vacuolar side of the membrane; that stretch reads RYHFTLPSDY…WFVVWSARSL (317 aa). His-149, Asp-161, Glu-194, Glu-219, and His-293 together coordinate Zn(2+). The chain crosses the membrane as a helical span at residues 353–373; the sequence is FYWNCIILALFPSILAILFLV. The Cytoplasmic segment spans residues 374–390; it reads AYDMQLLKFNFWDAMLR. Residues 391-411 traverse the membrane as a helical segment; the sequence is LPVSVCLAYFCVKLFQVLVGQ. Residues 412-420 lie on the Vacuolar side of the membrane; sequence LNPYVFSRD. Residues 421–441 form a helical membrane-spanning segment; that stretch reads YVSPILAEASMFIFMNYVILS. Residues 442-451 lie on the Cytoplasmic side of the membrane; that stretch reads SWERLRPLRD. Residues 452–472 form a helical membrane-spanning segment; sequence FKTVALVEVSMVLWIYLISVT. The Vacuolar portion of the chain corresponds to 473–487; it reads RWLRDSDYTATGLYP. Residues 488–508 form a helical membrane-spanning segment; that stretch reads FTIGYTFVSIGAIIGVFCATF. The Cytoplasmic portion of the chain corresponds to 509–647; sequence KAKLNPEDDS…SILNYDWSIQ (139 aa). Residues 534–585 are disordered; sequence MQHQYQQHSQKHSNQHSPHHSTHHSAQHSVHHSPRQSIHQVPSSEQRQRDAS. Basic residues predominate over residues 542–567; sequence SQKHSNQHSPHHSTHHSAQHSVHHSP. A compositionally biased stretch (polar residues) spans 568–578; it reads RQSIHQVPSSE. The chain crosses the membrane as a helical span at residues 648 to 668; sequence FMVVTPWVTYFTWICLDLIMG. Residues 669-681 lie on the Vacuolar side of the membrane; that stretch reads AMNQTIQESAKGT. N-linked (GlcNAc...) asparagine glycosylation is present at Asn-671. A helical membrane pass occupies residues 682–702; it reads TFVTHMALIGSLLLSLPMLPF. Over 703–708 the chain is Cytoplasmic; the sequence is TYKLHS. The chain crosses the membrane as a helical span at residues 709–729; the sequence is FAGMLFLLLAVTTAVWTIVAP. The Vacuolar portion of the chain corresponds to 730–1011; sequence PFTESSPLKL…MVSVTKYVEL (282 aa). 3 N-linked (GlcNAc...) asparagine glycosylation sites follow: Asn-751, Asn-825, and Asn-854.

It belongs to the peptidase M28 family. Requires Zn(2+) as cofactor.

The protein localises to the vacuole membrane. Functionally, may be involved in vacuolar sorting and osmoregulation. The chain is Vacuolar membrane protease from Eremothecium gossypii (strain ATCC 10895 / CBS 109.51 / FGSC 9923 / NRRL Y-1056) (Yeast).